The sequence spans 221 residues: Glutathione S-transferase 1 (221 aa).

The GST N-terminal domain occupies 7 to 88 (QKMQLYSFSL…YLEEKFPENP (82 aa)). Glutathione-binding positions include 17–22 (SSCAWR), V60, 72–73 (DS), Q112, and 116–118 (NLA). A GST C-terminal domain is found at 93–221 (DLQKRALNYQ…ISPMLDEAKS (129 aa)).

This sequence belongs to the GST superfamily. Zeta family.

It catalyses the reaction RX + glutathione = an S-substituted glutathione + a halide anion + H(+). In terms of biological role, conjugation of reduced glutathione to a wide number of exogenous and endogenous hydrophobic electrophiles. This Dianthus caryophyllus (Carnation) protein is Glutathione S-transferase 1 (GST1).